A 200-amino-acid chain; its full sequence is Holliday junction branch migration complex subunit RuvA (200 aa).

The domain I stretch occupies residues 1-64; the sequence is MIGQLTGLVG…EDAIQLFGFA (64 aa). Positions 65 to 143 are domain II; the sequence is TTDERDWFRL…KMPGGGGTVS (79 aa). Residues 144-148 are flexible linker; sequence APGIV. The tract at residues 149–200 is domain III; the sequence is SGPSVENDALLALAGLGFRRAEAWPVLSKVLAENENATLDLAIRLSLKDLAR.

Belongs to the RuvA family. In terms of assembly, homotetramer. Forms an RuvA(8)-RuvB(12)-Holliday junction (HJ) complex. HJ DNA is sandwiched between 2 RuvA tetramers; dsDNA enters through RuvA and exits via RuvB. An RuvB hexamer assembles on each DNA strand where it exits the tetramer. Each RuvB hexamer is contacted by two RuvA subunits (via domain III) on 2 adjacent RuvB subunits; this complex drives branch migration. In the full resolvosome a probable DNA-RuvA(4)-RuvB(12)-RuvC(2) complex forms which resolves the HJ.

It localises to the cytoplasm. Its function is as follows. The RuvA-RuvB-RuvC complex processes Holliday junction (HJ) DNA during genetic recombination and DNA repair, while the RuvA-RuvB complex plays an important role in the rescue of blocked DNA replication forks via replication fork reversal (RFR). RuvA specifically binds to HJ cruciform DNA, conferring on it an open structure. The RuvB hexamer acts as an ATP-dependent pump, pulling dsDNA into and through the RuvAB complex. HJ branch migration allows RuvC to scan DNA until it finds its consensus sequence, where it cleaves and resolves the cruciform DNA. In Gluconobacter oxydans (strain 621H) (Gluconobacter suboxydans), this protein is Holliday junction branch migration complex subunit RuvA.